The following is a 238-amino-acid chain: uncharacterized protein (238 aa).

3 consecutive transmembrane segments (helical) span residues 19 to 39 (IVIEAFPGTGLVGSIAGFQII), 79 to 99 (IILFSDIIISPFKINGLAEFI), and 141 to 161 (YVEIFDFGVVGGMGGNLLIKC).

It localises to the cell membrane. This is an uncharacterized protein from Methanocaldococcus jannaschii (strain ATCC 43067 / DSM 2661 / JAL-1 / JCM 10045 / NBRC 100440) (Methanococcus jannaschii).